Reading from the N-terminus, the 305-residue chain is Nuclear egress protein 1 (305 aa).

The segment at 1 to 42 (MYDIAPRRSGSRPGPGRDKTRRRSRFSAAGNPGVERRASRKS) is disordered. The CCCH-type zinc finger occupies 105-224 (CLTLSGMGYY…YVIFPGTSAH (120 aa)).

Belongs to the herpesviridae NEC1 protein family. In terms of assembly, forms a heterohexameric complex with NEC2. Interacts with capsid vertex specific component 2/CVC2; this interaction directs the capsid to the host inner nuclear membrane to initiate budding. Post-translationally, phosphorylated at serine residues in the N-terminus. This phosphorylation regulates the localization within the inner nuclear membrane.

It localises to the host nucleus inner membrane. Functionally, plays an essential role in virion nuclear egress, the first step of virion release from infected cell. Within the host nucleus, NEC1 interacts with the newly formed capsid through the vertexes and directs it to the inner nuclear membrane by associating with NEC2. Induces the budding of the capsid at the inner nuclear membrane as well as its envelopment into the perinuclear space. There, the NEC1/NEC2 complex promotes the fusion of the enveloped capsid with the outer nuclear membrane and the subsequent release of the viral capsid into the cytoplasm where it will reach the secondary budding sites in the host Golgi or trans-Golgi network. The polypeptide is Nuclear egress protein 1 (Human herpesvirus 2 (strain HG52) (HHV-2)).